Reading from the N-terminus, the 265-residue chain is Mlc titration factor A (265 aa).

Residues His111, His148, His152, and Glu211 each coordinate Zn(2+).

It belongs to the MtfA family. In terms of assembly, interacts with Mlc. Zn(2+) is required as a cofactor.

It localises to the cytoplasm. Functionally, involved in the modulation of the activity of the glucose-phosphotransferase system (glucose-PTS). Interacts with the transcriptional repressor Mlc, preventing its interaction with DNA and leading to the modulation of expression of genes regulated by Mlc, including ptsG, which encodes the PTS system glucose-specific EIICB component. Its function is as follows. Shows zinc-dependent metallopeptidase activity. In Salmonella enteritidis PT4 (strain P125109), this protein is Mlc titration factor A.